Consider the following 147-residue polypeptide: Nudix hydrolase 1 (147 aa).

Serine 2 carries the N-acetylserine modification. In terms of domain architecture, Nudix hydrolase spans 7 to 140; sequence IPRVAVVVFI…EKLFGSGFNP (134 aa). The Nudix box signature appears at 41 to 62; it reads GHLEFGESFEECAAREVMEETG. 2 residues coordinate Mg(2+): glutamate 56 and glutamate 60.

It belongs to the Nudix hydrolase family. As to quaternary structure, homodimer. Requires Mg(2+) as cofactor. The cofactor is Mn(2+). In terms of tissue distribution, expressed in roots, stems and leaves.

The protein resides in the cytoplasm. It catalyses the reaction 7,8-dihydroneopterin 3'-triphosphate + H2O = 7,8-dihydroneopterin 3'-phosphate + diphosphate + H(+). The catalysed reaction is NAD(+) + H2O = beta-nicotinamide D-ribonucleotide + AMP + 2 H(+). It carries out the reaction NADH + H2O = reduced beta-nicotinamide D-ribonucleotide + AMP + 2 H(+). The enzyme catalyses 8-oxo-dGTP + H2O = 8-oxo-dGMP + diphosphate + H(+). Functionally, mediates the hydrolysis of some nucleoside diphosphate derivatives. Its substrate specificity is unclear. In vitro, it can use NTP, dNTP, 8-oxo-GTP, 8-oxo-dGTP, dGTP, dATP, dTTP or dihydroneopterin triphosphate (DHNTP) as substrate. Has some NADH pyrophosphatase activity in vitro; however, such activity may not be relevant in vivo due to the high concentration of manganese used during the experiments. Plays an important role in protection against oxidative DNA and RNA damage by removing oxidatively damaged form of guanine. The chain is Nudix hydrolase 1 (NUDT1) from Arabidopsis thaliana (Mouse-ear cress).